The primary structure comprises 140 residues: Large ribosomal subunit protein uL11 (140 aa).

The protein belongs to the universal ribosomal protein uL11 family. As to quaternary structure, part of the ribosomal stalk of the 50S ribosomal subunit. Interacts with L10 and the large rRNA to form the base of the stalk. L10 forms an elongated spine to which L12 dimers bind in a sequential fashion forming a multimeric L10(L12)X complex. Post-translationally, one or more lysine residues are methylated.

In terms of biological role, forms part of the ribosomal stalk which helps the ribosome interact with GTP-bound translation factors. The chain is Large ribosomal subunit protein uL11 from Dehalococcoides mccartyi (strain CBDB1).